We begin with the raw amino-acid sequence, 391 residues long: Choline/ethanolaminephosphotransferase 1 (391 aa).

Over 1–49 (MGYFVPDSHIENLKSYKYQSEDRSLVSKYFLKPFWQRFCHIFPTWMAPN) the chain is Lumenal. Residues 50–69 (IITLSGFAFIVINVLTVFYY) form a helical membrane-spanning segment. Topologically, residues 70 to 172 (DPNLNTDTPR…YHTHTLYLSE (103 aa)) are cytoplasmic. Residues 173–193 (FSGPVEGILIVCVSLILTGIY) form a helical membrane-spanning segment. Topologically, residues 194-211 (GKQVIWHTYLFTITVGDK) are lumenal. Residues 212 to 232 (VIDVDTLDIVFSLAVFGLVMN) form a helical membrane-spanning segment. Residues 233-264 (ALSAKRNVDKYYRNSTSSANNITQIEQDSAIK) are Cytoplasmic-facing. Residues 265–282 (GLLPFFAYYASIALLVWM) traverse the membrane as a helical segment. At 283-285 (QPS) the chain is on the lumenal side. Residues 286–308 (FITLSFILSVGFTGAFTVGRIIV) form a helical membrane-spanning segment. Residues 309-321 (CHLTKQSFPMFNA) lie on the Cytoplasmic side of the membrane. A helical transmembrane segment spans residues 322–342 (PMLIPLCQIVLYKICLSLWGI). The Lumenal segment spans residues 343 to 346 (ESNK). Residues 347–367 (IVFALSWLGFGLSLGVHIMFM) traverse the membrane as a helical segment. Residues 368–391 (NDIIHEFTEYLDVYALSIKRSKLT) lie on the Cytoplasmic side of the membrane.

This sequence belongs to the CDP-alcohol phosphatidyltransferase class-I family. It depends on Mg(2+) as a cofactor.

It is found in the golgi apparatus membrane. It carries out the reaction CDP-ethanolamine + a 1,2-diacyl-sn-glycerol = a 1,2-diacyl-sn-glycero-3-phosphoethanolamine + CMP + H(+). It catalyses the reaction CDP-choline + a 1,2-diacyl-sn-glycerol = a 1,2-diacyl-sn-glycero-3-phosphocholine + CMP + H(+). The catalysed reaction is CDP-N-methylethanolamine + a 1,2-diacyl-sn-glycerol = a 1,2-diacyl-sn-glycero-3-phospho-N-methylethanolamine + CMP + H(+). The enzyme catalyses CDP-N,N-dimethylethanolamine + a 1,2-diacyl-sn-glycerol = a 1,2-diacyl-sn-glycero-3-phospho-N,N-dimethylethanolamine + CMP + H(+). It carries out the reaction 1,2-di-(9Z-octadecenoyl)-glycerol + CDP-choline = 1,2-di-(9Z-octadecenoyl)-sn-glycero-3-phosphocholine + CMP + H(+). It catalyses the reaction 1,2-di-(9Z-octadecenoyl)-glycerol + CDP-ethanolamine = 1,2-di-(9Z-octadecenoyl)-sn-glycero-3-phosphoethanolamine + CMP + H(+). Its pathway is phospholipid metabolism; phosphatidylethanolamine biosynthesis; phosphatidylethanolamine from ethanolamine: step 3/3. The protein operates within phospholipid metabolism; phosphatidylcholine biosynthesis; phosphatidylcholine from phosphocholine: step 2/2. Its activity is regulated as follows. Requires a divalent cation activator, and is inhibited by CMP. Activated by phospholipids, especially phosphatidylcholine. Catalyzes the final step in the CDP-ethanolamine route leading to phosphatidylethanolamine (PE). Can also catalyze the formation of phosphatidylcholine (PC) from CDP-choline, but does not substantially contribute to PC biosynthesis. Preferentially uses CDP-dimethylethanolamine and CDP-propanolamine as aminoalcohol substrates. Shows highest activity toward di-unsaturated diacylglycerol species as lipid substrates. The CDP-ethanolamine pathway may play a role in maintaining the proper PE species distribution. This is Choline/ethanolaminephosphotransferase 1 (EPT1) from Saccharomyces cerevisiae (strain ATCC 204508 / S288c) (Baker's yeast).